We begin with the raw amino-acid sequence, 343 residues long: uncharacterized protein (343 aa).

Disordered regions lie at residues 1-25 (MSSK…LSGT), 62-119 (KNIR…DCSD), and 169-188 (NPKI…TKKS). Over residues 62-71 (KNIRQFKKSQ) the composition is skewed to basic residues. Residues 72–81 (NKTDTEKSGE) are compositionally biased toward basic and acidic residues. Positions 83–107 (NDSDYSDYSDNSDDVDDLDDVDDLN) are enriched in acidic residues.

This is an uncharacterized protein from Acanthamoeba polyphaga (Amoeba).